Here is a 357-residue protein sequence, read N- to C-terminus: Dynein axonemal assembly factor 10 (357 aa).

WD repeat units lie at residues 63 to 105, 115 to 154, 162 to 205, 207 to 249, 257 to 297, and 319 to 357; these read EKAK…MPVY, NAIDGIGGLGIGEGAPEIVTGSRDGTVKVWDPRQKDDPVA, ENKR…LRWE, NIKN…PTKG, AHKS…QRSK, and LSTQPISSLDWSPDKRGLCVCSSFDQTVRVLIVTKLNKI.

In terms of assembly, component of the PAQosome complex which is responsible for the biogenesis of several protein complexes and which consists of R2TP complex members RUVBL1, RUVBL2, RPAP3 and PIH1D1, URI complex members PFDN2, PFDN6, PDRG1, UXT and URI1 as well as ASDURF, POLR2E and DNAAF10/WDR92. Interacts with PIH1D1; the interaction associates DNAAF10 with the R2TP complex. Interacts with several dynein axonemal assembly factors. As to expression, widely expressed with the highest expression in testis.

It is found in the dynein axonemal particle. Its function is as follows. Key assembly factor specifically required for the stability of axonemal dynein heavy chains in cytoplasm. This Homo sapiens (Human) protein is Dynein axonemal assembly factor 10.